A 186-amino-acid polypeptide reads, in one-letter code: Tumor necrosis factor alpha-induced protein 8-like protein 1 (186 aa).

This sequence belongs to the TNFAIP8 family. Interacts with FBXW5; TNFAIP8L1 competes with TSC2 to bind FBXW5 increasing TSC2 stability by preventing its ubiquitination. In terms of tissue distribution, high expression detected in most carcinoma cell lines, especially in cells transformed with virus genomes.

Its subcellular location is the cytoplasm. In terms of biological role, acts as a negative regulator of mTOR activity. This chain is Tumor necrosis factor alpha-induced protein 8-like protein 1 (TNFAIP8L1), found in Homo sapiens (Human).